The chain runs to 151 residues: Large ribosomal subunit protein uL16 (151 aa).

This sequence belongs to the universal ribosomal protein uL16 family. As to quaternary structure, part of the 50S ribosomal subunit.

Functionally, binds 23S rRNA and is also seen to make contacts with the A and possibly P site tRNAs. This chain is Large ribosomal subunit protein uL16, found in Chloroflexus aurantiacus (strain ATCC 29364 / DSM 637 / Y-400-fl).